The sequence spans 356 residues: Zinc finger CCCH domain-containing protein 49 (356 aa).

2 C3H1-type zinc fingers span residues 120–146 (YSGTACPDFRKGGCKKGDSCEFAHGVF) and 155–177 (YRTQPCKDGGNCLRKICFFAHSP). Positions 209–235 (ISPVSGSPPMSPRADSESSPMTQSLSR) are disordered. Positions 225–235 (ESSPMTQSLSR) are enriched in polar residues.

In Arabidopsis thaliana (Mouse-ear cress), this protein is Zinc finger CCCH domain-containing protein 49.